Consider the following 618-residue polypeptide: Baculoviral IAP repeat-containing protein 2 (618 aa).

BIR repeat units follow at residues 46 to 113 (ELYR…CSFI), 184 to 250 (EEAR…CPFL), and 269 to 336 (HAAR…CEFL). Residues cysteine 306, cysteine 309, histidine 326, and cysteine 333 each contribute to the Zn(2+) site. A CARD domain is found at 453-543 (MASDDLSLIR…TLYKNLFVDK (91 aa)). The RING-type zinc finger occupies 571–606 (CKVCMDKEVSVVFIPCGHLVVCQECAPSLRKCPICR).

It belongs to the IAP family. As to quaternary structure, interacts with DIABLO/SMAC and with PRSS25; these interactions inhibit apoptotic suppressor activity. Interacts with CASP9. Interacts (via BIR domains) with TRAF2; the interaction is required for IKBKE ubiquitination. Interacts with E2F1, RIPK1, RIPK2, RIPK3, RIPK4, BIRC5/survivin and USP19. HSP90AB1. Interacts with UBXN1. Interacts with GSK3B. Interacts with several death receptors, inclusing FAS, TNFRSF10A and TNFRSF10B. Recruited to TNFRSF10B in the absence of receptor stimulation. When TNFRSF10B is stimulated, further recruited to the receptor and cleaved by caspases. Proteolytic fragments remain associated with TNFRSF10B. Auto-ubiquitinated and degraded by the proteasome in apoptotic cells. In terms of processing, upon stimulation of death receptors, including TNFRSF10B, recruited to receptors and cleaved by caspases. Proteolytic fragments remain associated with the receptors. This cleavage presumably inactivates the protein. Present in many fetal and adult tissues. Mainly expressed in adult skeletal muscle, thymus, testis, ovary, and pancreas, low or absent in brain and peripheral blood leukocytes.

Its subcellular location is the cytoplasm. It is found in the nucleus. It catalyses the reaction S-ubiquitinyl-[E2 ubiquitin-conjugating enzyme]-L-cysteine + [acceptor protein]-L-lysine = [E2 ubiquitin-conjugating enzyme]-L-cysteine + N(6)-ubiquitinyl-[acceptor protein]-L-lysine.. With respect to regulation, the CARD domain inhibits the activation of E3 ubiquitin ligase activity by preventing RING domain dimerization and E2 ubiquitin donor binding and activation. The CARD domain-mediated autoinhibition of the E3 ubiquitin-protein ligase activity suppresses cell proliferation and migration. USP19 regulates the stability of BIRC2/c-IAP1 by preventing its ubiquitination. Its function is as follows. Multi-functional protein which regulates not only caspases and apoptosis, but also modulates inflammatory signaling and immunity, mitogenic kinase signaling, and cell proliferation, as well as cell invasion and metastasis. Acts as an E3 ubiquitin-protein ligase regulating NF-kappa-B signaling and regulates both canonical and non-canonical NF-kappa-B signaling by acting in opposite directions: acts as a positive regulator of the canonical pathway and suppresses constitutive activation of non-canonical NF-kappa-B signaling. The target proteins for its E3 ubiquitin-protein ligase activity include: RIPK1, RIPK2, RIPK3, RIPK4, CASP3, CASP7, CASP8, TRAF2, DIABLO/SMAC, MAP3K14/NIK, MAP3K5/ASK1, IKBKG/NEMO, IKBKE and MXD1/MAD1. Can also function as an E3 ubiquitin-protein ligase of the NEDD8 conjugation pathway, targeting effector caspases for neddylation and inactivation. Acts as an important regulator of innate immune signaling via regulation of Toll-like receptors (TLRs), Nodlike receptors (NLRs) and RIG-I like receptors (RLRs), collectively referred to as pattern recognition receptors (PRRs). Protects cells from spontaneous formation of the ripoptosome, a large multi-protein complex that has the capability to kill cancer cells in a caspase-dependent and caspase-independent manner. Suppresses ripoptosome formation by ubiquitinating RIPK1 and CASP8. Can stimulate the transcriptional activity of E2F1. Plays a role in the modulation of the cell cycle. The protein is Baculoviral IAP repeat-containing protein 2 (BIRC2) of Homo sapiens (Human).